We begin with the raw amino-acid sequence, 123 residues long: Large ribosomal subunit protein bL19 (123 aa).

Belongs to the bacterial ribosomal protein bL19 family.

Functionally, this protein is located at the 30S-50S ribosomal subunit interface and may play a role in the structure and function of the aminoacyl-tRNA binding site. The sequence is that of Large ribosomal subunit protein bL19 from Ureaplasma urealyticum serovar 10 (strain ATCC 33699 / Western).